The sequence spans 330 residues: tRNA U34 carboxymethyltransferase (330 aa).

Residues lysine 91, tryptophan 105, lysine 110, glycine 130, 152 to 154 (DPS), 181 to 182 (IE), methionine 196, tyrosine 200, and arginine 315 contribute to the carboxy-S-adenosyl-L-methionine site.

The protein belongs to the class I-like SAM-binding methyltransferase superfamily. CmoB family. In terms of assembly, homotetramer.

The catalysed reaction is carboxy-S-adenosyl-L-methionine + 5-hydroxyuridine(34) in tRNA = 5-carboxymethoxyuridine(34) in tRNA + S-adenosyl-L-homocysteine + H(+). Its function is as follows. Catalyzes carboxymethyl transfer from carboxy-S-adenosyl-L-methionine (Cx-SAM) to 5-hydroxyuridine (ho5U) to form 5-carboxymethoxyuridine (cmo5U) at position 34 in tRNAs. The chain is tRNA U34 carboxymethyltransferase from Shewanella sediminis (strain HAW-EB3).